The primary structure comprises 123 residues: Ribosome-binding factor A (123 aa).

The protein belongs to the RbfA family. As to quaternary structure, monomer. Binds 30S ribosomal subunits, but not 50S ribosomal subunits or 70S ribosomes.

It is found in the cytoplasm. In terms of biological role, one of several proteins that assist in the late maturation steps of the functional core of the 30S ribosomal subunit. Associates with free 30S ribosomal subunits (but not with 30S subunits that are part of 70S ribosomes or polysomes). Required for efficient processing of 16S rRNA. May interact with the 5'-terminal helix region of 16S rRNA. This chain is Ribosome-binding factor A, found in Chlorobium chlorochromatii (strain CaD3).